The primary structure comprises 294 residues: uncharacterized protein (294 aa).

Disordered stretches follow at residues 25 to 59 (VQVYRPVGQGAKRRINSEESDVSEDGNSKPKRVRR) and 77 to 141 (LKDD…FEAP). Residues 86–139 (YEELEDDDDDESIEEESDSEFEGESSSDEEESSYDSDSDYDSETEPEDSDDDFE) show a composition bias toward acidic residues. The stretch at 201–234 (IKFYKRNTTFTEEELAEIEEDLLAEVKARYNNMK) forms a coiled coil. The span at 242-259 (TIETTEDDKKAGEVNKYD) shows a compositional bias: basic and acidic residues. Positions 242–294 (TIETTEDDKKAGEVNKYDIDDDFIEKTESDEEEEITEDDSSEQETVVVEPVDE) are disordered. Acidic residues predominate over residues 260-283 (IDDDFIEKTESDEEEEITEDDSSE).

This is an uncharacterized protein from Magallana gigas (Pacific oyster).